Here is a 98-residue protein sequence, read N- to C-terminus: NADH-ubiquinone oxidoreductase chain 4L (98 aa).

The next 3 membrane-spanning stretches (helical) occupy residues 2–22 (PSIF…TLVF), 29–49 (SLLC…LIIL), and 61–81 (ILLL…LVMV).

Belongs to the complex I subunit 4L family. Core subunit of respiratory chain NADH dehydrogenase (Complex I) which is composed of 45 different subunits.

The protein resides in the mitochondrion inner membrane. It catalyses the reaction a ubiquinone + NADH + 5 H(+)(in) = a ubiquinol + NAD(+) + 4 H(+)(out). Core subunit of the mitochondrial membrane respiratory chain NADH dehydrogenase (Complex I) which catalyzes electron transfer from NADH through the respiratory chain, using ubiquinone as an electron acceptor. Part of the enzyme membrane arm which is embedded in the lipid bilayer and involved in proton translocation. This Propithecus tattersalli (Golden-crowned Sifaka) protein is NADH-ubiquinone oxidoreductase chain 4L (MT-ND4L).